Consider the following 198-residue polypeptide: uncharacterized protein (198 aa).

The interval 166–198 (GYEPDEKARKKRERVKRSEVEDQLKINVKPTRR) is disordered.

This is an uncharacterized protein from Coxiella burnetii (strain RSA 493 / Nine Mile phase I).